A 293-amino-acid polypeptide reads, in one-letter code: Bifunctional protein FolD (293 aa).

NADP(+)-binding positions include 165–167 (GRS), serine 190, and isoleucine 231.

The protein belongs to the tetrahydrofolate dehydrogenase/cyclohydrolase family. As to quaternary structure, homodimer.

It catalyses the reaction (6R)-5,10-methylene-5,6,7,8-tetrahydrofolate + NADP(+) = (6R)-5,10-methenyltetrahydrofolate + NADPH. The catalysed reaction is (6R)-5,10-methenyltetrahydrofolate + H2O = (6R)-10-formyltetrahydrofolate + H(+). The protein operates within one-carbon metabolism; tetrahydrofolate interconversion. Functionally, catalyzes the oxidation of 5,10-methylenetetrahydrofolate to 5,10-methenyltetrahydrofolate and then the hydrolysis of 5,10-methenyltetrahydrofolate to 10-formyltetrahydrofolate. This Parasynechococcus marenigrum (strain WH8102) protein is Bifunctional protein FolD.